The sequence spans 383 residues: AP-1-like transcription factor YAP6 (383 aa).

Disordered regions lie at residues 1-64 (MQNP…ISVN), 83-113 (DYRS…SYNR), and 168-239 (TLPS…KAFR). Polar residues predominate over residues 13–64 (NQGSSSMATYNASEKNLNEHPSPQIAQPSTSQKLPYRINPTTTNGDTDISVN). The segment covering 88 to 101 (HQSPIHPSYIIPPH) has biased composition (low complexity). The span at 168-184 (TLPSRNTSVTTAPPSFQ) shows a compositional bias: polar residues. Residues 185 to 206 (NSADTAKNSADNNDNNDNVTKP) are compositionally biased toward low complexity. Positions 213-222 (QLISSSGKTL) are enriched in polar residues. The 64-residue stretch at 221–284 (TLRNTRRAAQ…NDNNILIAQH (64 aa)) folds into the bZIP domain. A basic motif region spans residues 223 to 247 (RNTRRAAQNRTAQKAFRQRKEKYIK). Over residues 227-237 (RAAQNRTAQKA) the composition is skewed to low complexity. The leucine-zipper stretch occupies residues 249–277 (LEQKSKIFDDLLAENNNFKSLNDSLRNDN).

It belongs to the bZIP family. YAP subfamily. In terms of assembly, homodimer.

Its subcellular location is the nucleus. Transcription activator involved in the regulation of genes expressed in response to environmental changes and metabolic requirements. According to genome-wide promoter binding and gene expression studies it regulates, among others, genes involved in ribosome biogenesis, protein synthesis, carbohydrate metabolism, and carbohydrate transport. It may also be involved in pleiotropic drug resistance. When overexpressed, it confers resistance to cisplatin, methylmethanosulfonate, and mitomycin C, and increases cellular tolerance to sodium and lithium. This is AP-1-like transcription factor YAP6 (YAP6) from Saccharomyces cerevisiae (strain ATCC 204508 / S288c) (Baker's yeast).